We begin with the raw amino-acid sequence, 317 residues long: Hps1-dma1 cluster cytochrome P450 monooxygenase cyp3.1 (317 aa).

Positions 183–205 are disordered; it reads PAIETDRKTSSHSRSPTALADKQ. C260 serves as a coordination point for heme.

It belongs to the cytochrome P450 family. The cofactor is heme.

It functions in the pathway secondary metabolite biosynthesis. Cytochrome P450 monooxygenase; part of the hps1-dma1 gene cluster that probably mediates the biosynthesis a derivative of cyclopiazonic acid (CPA). The hybrid polyketide synthase-nonribosomal peptide synthetase (PKS-NRPS) nps1 might incorporates acetyl-CoA, malonyl-CoA, and tryptophan (Trp) and utilizes a C-terminal redox-incompetent reductase domain to make and release the tryptophan tetramic acid, cyclo-acetoacetyl-L-tryptophan (c-AATrp), as the first intermediate in the pathway. In addition, the cluster also includes the tryptophan dimethylallyltransferase dma1, the FAD-dependent oxidoreductase toxD, the cytochrome P450 monooxygenase cyp3.1 and the methyltransferase DOTSEDRAFT_139328; the latter 2 being not present in all CPA-producing fungi but involved in additional modifications that occur in biosynthesis the of a range of CPA and CPA-like products. Further studies are required to clarify whether the CPA-like hps1-dma1 cluster is functional or a non-functional relic reflecting evolution of D.septosporum. The sequence is that of Hps1-dma1 cluster cytochrome P450 monooxygenase cyp3.1 (cyp3.1) from Dothistroma septosporum (strain NZE10 / CBS 128990) (Red band needle blight fungus).